The primary structure comprises 44 residues: MFELSSILIRGGGGVLIVLILLLWIVDENCTDAKAMAYNINCTV.

A helical transmembrane segment spans residues 6–26; the sequence is SILIRGGGGVLIVLILLLWIV.

The protein localises to the membrane. This is an uncharacterized protein from Ornithodoros (relapsing fever ticks).